The sequence spans 197 residues: Nascent polypeptide-associated complex subunit alpha (197 aa).

Acidic residues predominate over residues 1–20; that stretch reads MAEPVEDSVDEISSEGDSDV. Disordered regions lie at residues 1 to 46 and 120 to 154; these read MAEP…RKLL and GADR…SKAD. One can recognise an NAC-A/B domain in the interval 36-101; that stretch reads DKNERKSRKL…AKVEDMSQNS (66 aa). The segment covering 134 to 154 has biased composition (basic and acidic residues); sequence SGHDHAHDHDHSHGDCASKAD. The UBA domain occupies 158-195; that stretch reads VNQSDIDLVVSQVGCTREQAVEALIKNKGDIVETIMQL.

It belongs to the NAC-alpha family.

In terms of biological role, may promote appropriate targeting of ribosome-nascent polypeptide complexes. This chain is Nascent polypeptide-associated complex subunit alpha, found in Babesia divergens.